Here is a 954-residue protein sequence, read N- to C-terminus: Glycine dehydrogenase (decarboxylating) (954 aa).

The residue at position 704 (K704) is an N6-(pyridoxal phosphate)lysine.

The protein belongs to the GcvP family. In terms of assembly, the glycine cleavage system is composed of four proteins: P, T, L and H. Pyridoxal 5'-phosphate is required as a cofactor.

The enzyme catalyses N(6)-[(R)-lipoyl]-L-lysyl-[glycine-cleavage complex H protein] + glycine + H(+) = N(6)-[(R)-S(8)-aminomethyldihydrolipoyl]-L-lysyl-[glycine-cleavage complex H protein] + CO2. Functionally, the glycine cleavage system catalyzes the degradation of glycine. The P protein binds the alpha-amino group of glycine through its pyridoxal phosphate cofactor; CO(2) is released and the remaining methylamine moiety is then transferred to the lipoamide cofactor of the H protein. The protein is Glycine dehydrogenase (decarboxylating) of Rhizobium johnstonii (strain DSM 114642 / LMG 32736 / 3841) (Rhizobium leguminosarum bv. viciae).